An 83-amino-acid polypeptide reads, in one-letter code: Cell division topological specificity factor (83 aa).

Belongs to the MinE family.

Its function is as follows. Prevents the cell division inhibition by proteins MinC and MinD at internal division sites while permitting inhibition at polar sites. This ensures cell division at the proper site by restricting the formation of a division septum at the midpoint of the long axis of the cell. The sequence is that of Cell division topological specificity factor from Alcanivorax borkumensis (strain ATCC 700651 / DSM 11573 / NCIMB 13689 / SK2).